The primary structure comprises 285 residues: MRAFIFFLFMLLAMFSASSTQISNTSVFKLEENPKPALILEEKNEANHLGGQRDSNKQGGSYTQGNPGTFRLQGQPGYFNKLEKPRHFKQGRAGVLNQPGILKNSGKSNQKGNPESSNKQENSGSSSQLGRPGISTQQGNPGSSDQQEKPGSFSQKVMVGSSSQQGKPGSSSQHGNLGSSTQKGNLGSSSLQGHLGLSSHQGKPESSGQQGKPGSSSQQGNLGTSGQQEKPGSSSQQGKPGLSSHQGKPGSSSQQGNLHLSSQQGNQGPSSKQRKPGSSSRQGNL.

The signal sequence occupies residues 1–20 (MRAFIFFLFMLLAMFSASST). Residue N24 is glycosylated (N-linked (GlcNAc...) asparagine). 2 disordered regions span residues 47–77 (NHLG…GQPG) and 91–285 (GRAG…QGNL). Polar residues-rich tracts occupy residues 57 to 67 (KQGGSYTQGNP) and 105 to 114 (SGKSNQKGNP). The span at 115-128 (ESSNKQENSGSSSQ) shows a compositional bias: low complexity. The span at 134-145 (ISTQQGNPGSSD) shows a compositional bias: polar residues. Over residues 160–173 (GSSSQQGKPGSSSQ) the composition is skewed to low complexity. Over residues 174–185 (HGNLGSSTQKGN) the composition is skewed to polar residues. Residues 186-220 (LGSSSLQGHLGLSSHQGKPESSGQQGKPGSSSQQG) are compositionally biased toward low complexity. The segment covering 221-285 (NLGTSGQQEK…PGSSSRQGNL (65 aa)) has biased composition (polar residues).

This Homo sapiens (Human) protein is MARCO-like protein.